The sequence spans 396 residues: Ribosomal RNA large subunit methyltransferase I (396 aa).

The 80-residue stretch at 2–81 (SVRLVLAKGR…ESIDIAFFSR (80 aa)) folds into the PUA domain.

Belongs to the methyltransferase superfamily. RlmI family.

It localises to the cytoplasm. The catalysed reaction is cytidine(1962) in 23S rRNA + S-adenosyl-L-methionine = 5-methylcytidine(1962) in 23S rRNA + S-adenosyl-L-homocysteine + H(+). In terms of biological role, specifically methylates the cytosine at position 1962 (m5C1962) of 23S rRNA. The sequence is that of Ribosomal RNA large subunit methyltransferase I from Shigella flexneri.